The following is an 82-amino-acid chain: MRIKARIGVENSLTDVQQALKQQGHEVVTLNSEQDAQGCDCCVVTGQDSNMMGIADASIKGSVITAHGLTTDDICQQVESRT.

The protein belongs to the UPF0180 family.

The sequence is that of UPF0180 protein BAA_1480 from Bacillus anthracis (strain A0248).